We begin with the raw amino-acid sequence, 328 residues long: dITP/XTP pyrophosphatase (328 aa).

The unknown stretch occupies residues 1–129 (MSEKIYEYKD…ATSEQGFGDI (129 aa)). The NTP pyrophosphatase stretch occupies residues 130–324 (ILIATRNEGK…KLMEVFPAWQ (195 aa)). 134–139 (TRNEGK) contributes to the substrate binding site. The Proton acceptor role is filled by Asp196. Mg(2+) is bound at residue Asp196. Substrate contacts are provided by residues Ser197, 280–283 (FGYD), Lys303, and 308–309 (HR).

It belongs to the HAM1 NTPase family. In terms of assembly, homodimer. Requires Mg(2+) as cofactor.

It catalyses the reaction XTP + H2O = XMP + diphosphate + H(+). The enzyme catalyses dITP + H2O = dIMP + diphosphate + H(+). The catalysed reaction is ITP + H2O = IMP + diphosphate + H(+). Its function is as follows. Pyrophosphatase that catalyzes the hydrolysis of nucleoside triphosphates to their monophosphate derivatives, with a high preference for the non-canonical purine nucleotides XTP (xanthosine triphosphate), dITP (deoxyinosine triphosphate) and ITP. Seems to function as a house-cleaning enzyme that removes non-canonical purine nucleotides from the nucleotide pool, thus preventing their incorporation into DNA/RNA and avoiding chromosomal lesions. This is dITP/XTP pyrophosphatase from Streptococcus pyogenes serotype M3 (strain ATCC BAA-595 / MGAS315).